The chain runs to 121 residues: Small ribosomal subunit protein uS13 (121 aa).

The disordered stretch occupies residues 91 to 121; the sequence is HRMSLPVRGQRTRTNARTRRGSRKTVAGRKK. Residues 100-121 are compositionally biased toward basic residues; that stretch reads QRTRTNARTRRGSRKTVAGRKK.

This sequence belongs to the universal ribosomal protein uS13 family. Part of the 30S ribosomal subunit. Forms a loose heterodimer with protein S19. Forms two bridges to the 50S subunit in the 70S ribosome.

In terms of biological role, located at the top of the head of the 30S subunit, it contacts several helices of the 16S rRNA. In the 70S ribosome it contacts the 23S rRNA (bridge B1a) and protein L5 of the 50S subunit (bridge B1b), connecting the 2 subunits; these bridges are implicated in subunit movement. Contacts the tRNAs in the A and P-sites. The chain is Small ribosomal subunit protein uS13 from Prochlorococcus marinus (strain MIT 9301).